Reading from the N-terminus, the 962-residue chain is Atromentin synthetase nps3 (962 aa).

Positions 55-469 (FISSSAHDSS…SGRIKDTVIV (415 aa)) are adenylation (A) domain. One can recognise a Carrier domain in the interval 601–679 (VPATITETAF…DLAKYIDALV (79 aa)). Positions 606-676 (TETAFAKIFA…VLRDLAKYID (71 aa)) are thiolation and peptide carrier (T) domain. Ser-638 bears the O-(pantetheine 4'-phosphoryl)serine mark. Residues 702–805 (PIFFVHPGVG…VGLINIPPHI (104 aa)) form a thioesterase (TE) domain region.

Belongs to the ATP-dependent AMP-binding enzyme family.

The protein operates within secondary metabolite biosynthesis. Functionally, an L-tyrosine:2-oxoglutarate aminotransferase (probably amt1) and atromentin synthetase nps3 catalyze consecutive steps to turn over L-tyrosine into atromentin, which represents the generic precursor molecule for the entire terphenylquinone and pulvinic acid family of pigments, which are widely distributed secondary metabolites in homobasidiomycetes. The first step catalyzed by the aminotransferase converts L-tyrosine in to 4-hydroxyphenylpyruvate (4-HPP). Adenylation of two 4-HPP monomers by the nps3 adenylation (A) domain, covalent tethering of the monomers as a thioester and oxoester onto the nps3 thiolation (T) and thioesterase (TE) domains, respectively, and symmetric C-C-bond formation between two monomers catalyzed by the nps3 TE domain leads to atromentin. Follow-up products of atromentin in S.lacrymans include atromentic acid, xerocomic acid, isoxerocomic acid and variegatic acid. The chain is Atromentin synthetase nps3 (nps3) from Serpula lacrymans var. lacrymans (strain S7.9) (Dry rot fungus).